A 131-amino-acid polypeptide reads, in one-letter code: Small ribosomal subunit protein uS8 (131 aa).

The protein belongs to the universal ribosomal protein uS8 family. In terms of assembly, part of the 30S ribosomal subunit. Contacts proteins S5 and S12.

In terms of biological role, one of the primary rRNA binding proteins, it binds directly to 16S rRNA central domain where it helps coordinate assembly of the platform of the 30S subunit. In Cupriavidus metallidurans (strain ATCC 43123 / DSM 2839 / NBRC 102507 / CH34) (Ralstonia metallidurans), this protein is Small ribosomal subunit protein uS8.